The chain runs to 268 residues: Small ribosomal subunit protein mS43 (268 aa).

Residues 1–23 constitute a mitochondrion transit peptide; sequence MLNTGLRKGLALSPITHLLKRCS.

This sequence belongs to the mitochondrion-specific ribosomal protein mS43 family. In terms of assembly, component of the mitochondrial small ribosomal subunit (mt-SSU). Mature yeast 74S mitochondrial ribosomes consist of a small (37S) and a large (54S) subunit. The 37S small subunit contains a 15S ribosomal RNA (15S mt-rRNA) and at least 32 different proteins. The 54S large subunit contains a 21S rRNA (21S mt-rRNA) and at least 45 different proteins. mS43 forms a dimer with mS42, building a large protuberance adjacent to the mRNA channel exit in the mt-SSU body.

Its subcellular location is the mitochondrion. Its function is as follows. Component of the mitochondrial ribosome (mitoribosome), a dedicated translation machinery responsible for the synthesis of mitochondrial genome-encoded proteins, including at least some of the essential transmembrane subunits of the mitochondrial respiratory chain. The mitoribosomes are attached to the mitochondrial inner membrane and translation products are cotranslationally integrated into the membrane. This Schizosaccharomyces pombe (strain 972 / ATCC 24843) (Fission yeast) protein is Small ribosomal subunit protein mS43.